We begin with the raw amino-acid sequence, 597 residues long: Elongation factor 4 (597 aa).

In terms of domain architecture, tr-type G spans 2-184; the sequence is KHIRNFSIIA…NIVSAIPAPE (183 aa). GTP-binding positions include 14-19 and 131-134; these read DHGKST and NKID.

It belongs to the TRAFAC class translation factor GTPase superfamily. Classic translation factor GTPase family. LepA subfamily.

It is found in the cell inner membrane. The enzyme catalyses GTP + H2O = GDP + phosphate + H(+). Its function is as follows. Required for accurate and efficient protein synthesis under certain stress conditions. May act as a fidelity factor of the translation reaction, by catalyzing a one-codon backward translocation of tRNAs on improperly translocated ribosomes. Back-translocation proceeds from a post-translocation (POST) complex to a pre-translocation (PRE) complex, thus giving elongation factor G a second chance to translocate the tRNAs correctly. Binds to ribosomes in a GTP-dependent manner. The protein is Elongation factor 4 of Vibrio campbellii (strain ATCC BAA-1116).